A 134-amino-acid chain; its full sequence is MKKTPLLNIALSRVIASLGHGDILMIVDAGMPVPPGVELIDLALTRGVPDFVSVLDVVLSEMQVESHVLAREMADIKPPALQIIESLNLDDQLGQQRWISHEDLKALSRTAKAIIRTGECQPYSNLALVSGVVF.

His-20 serves as the catalytic Proton donor. Residues Asp-28, His-101, and 123–125 (YSN) each bind substrate.

This sequence belongs to the RbsD / FucU family. RbsD subfamily. In terms of assembly, homodecamer.

The protein localises to the cytoplasm. It carries out the reaction beta-D-ribopyranose = beta-D-ribofuranose. It participates in carbohydrate metabolism; D-ribose degradation; D-ribose 5-phosphate from beta-D-ribopyranose: step 1/2. Functionally, catalyzes the interconversion of beta-pyran and beta-furan forms of D-ribose. The sequence is that of D-ribose pyranase from Pseudomonas syringae pv. tomato (strain ATCC BAA-871 / DC3000).